The following is a 310-amino-acid chain: ATP-dependent protease (310 aa).

Residues 24 to 186 form the Integrase catalytic domain; it reads RLNQCFFKFK…TPNQKEENYF (163 aa).

The protein is ATP-dependent protease of Lactococcus lactis subsp. lactis (Streptococcus lactis).